A 247-amino-acid chain; its full sequence is 3-deoxy-manno-octulosonate cytidylyltransferase (247 aa).

Belongs to the KdsB family.

It localises to the cytoplasm. It catalyses the reaction 3-deoxy-alpha-D-manno-oct-2-ulosonate + CTP = CMP-3-deoxy-beta-D-manno-octulosonate + diphosphate. The protein operates within nucleotide-sugar biosynthesis; CMP-3-deoxy-D-manno-octulosonate biosynthesis; CMP-3-deoxy-D-manno-octulosonate from 3-deoxy-D-manno-octulosonate and CTP: step 1/1. It participates in bacterial outer membrane biogenesis; lipopolysaccharide biosynthesis. Functionally, activates KDO (a required 8-carbon sugar) for incorporation into bacterial lipopolysaccharide in Gram-negative bacteria. The sequence is that of 3-deoxy-manno-octulosonate cytidylyltransferase from Leptospira interrogans serogroup Icterohaemorrhagiae serovar Lai (strain 56601).